The sequence spans 160 residues: Serine-protein kinase RsbW (160 aa).

The protein belongs to the anti-sigma-factor family.

It carries out the reaction L-seryl-[protein] + ATP = O-phospho-L-seryl-[protein] + ADP + H(+). The catalysed reaction is L-threonyl-[protein] + ATP = O-phospho-L-threonyl-[protein] + ADP + H(+). Its function is as follows. Negative regulator of sigma-B activity. Phosphorylates and inactivates its specific antagonist protein, RsbV. Upon phosphorylation of RsbV, RsbW is released and binds to sigma-B, thereby blocking its ability to form an RNA polymerase holoenzyme (E-sigma-B). The polypeptide is Serine-protein kinase RsbW (Bacillus cereus (strain G9842)).